The sequence spans 511 residues: 2,3-bisphosphoglycerate-independent phosphoglycerate mutase (511 aa).

2 residues coordinate Mn(2+): D14 and S64. The active-site Phosphoserine intermediate is the S64. Substrate-binding positions include H125, 155 to 156 (RD), R187, R193, 259 to 262 (RADR), and K333. Positions 400, 404, 441, 442, and 460 each coordinate Mn(2+).

Belongs to the BPG-independent phosphoglycerate mutase family. Monomer. Mn(2+) serves as cofactor.

It catalyses the reaction (2R)-2-phosphoglycerate = (2R)-3-phosphoglycerate. Its pathway is carbohydrate degradation; glycolysis; pyruvate from D-glyceraldehyde 3-phosphate: step 3/5. Its function is as follows. Catalyzes the interconversion of 2-phosphoglycerate and 3-phosphoglycerate. The polypeptide is 2,3-bisphosphoglycerate-independent phosphoglycerate mutase (Idiomarina loihiensis (strain ATCC BAA-735 / DSM 15497 / L2-TR)).